The sequence spans 212 residues: Pyrrolidone-carboxylate peptidase (212 aa).

Residues Glu-78, Cys-141, and His-165 contribute to the active site.

It belongs to the peptidase C15 family. In terms of assembly, homotetramer.

It localises to the cytoplasm. The catalysed reaction is Release of an N-terminal pyroglutamyl group from a polypeptide, the second amino acid generally not being Pro.. Removes 5-oxoproline from various penultimate amino acid residues except L-proline. The sequence is that of Pyrrolidone-carboxylate peptidase from Staphylococcus aureus (strain NCTC 8325 / PS 47).